The chain runs to 819 residues: Protein O-mannosyl-transferase tmem260 (819 aa).

Residues 1-10 show a composition bias toward polar residues; it reads MNNSPTLSNT. The segment at 1 to 68 is disordered; the sequence is MNNSPTLSNT…NNNNNIINVN (68 aa). Positions 15–68 are enriched in low complexity; that stretch reads NNNNNSNSNSNSNNNNNNNNNNNNNSNNNNNNNNNVNRNVNNRNNNNNNIINVN. 3 N-linked (GlcNAc...) asparagine glycosylation sites follow: Asn18, Asn38, and Asn70. A run of 7 helical transmembrane segments spans residues 113–133, 152–172, 185–205, 210–230, 232–252, 285–305, and 316–336; these read IACI…TQYP, VAHP…SHII, FMSS…VYLW, WCGL…MYQI, GEVF…GVWY, LTNQ…LMFI, and ILSN…LLFI. Asn349 is a glycosylation site (N-linked (GlcNAc...) asparagine). The next 4 membrane-spanning stretches (helical) occupy residues 391 to 411, 427 to 447, 459 to 479, and 505 to 525; these read LIIQ…LNLL, MIIF…NLPI, FFMQ…KSIF, and YLLP…NYNL. N-linked (GlcNAc...) asparagine glycosylation is found at Asn531, Asn686, Asn693, and Asn783.

This sequence belongs to the glycosyltransferase 117 (GT117) family.

It localises to the endoplasmic reticulum membrane. It carries out the reaction a di-trans,poly-cis-dolichyl beta-D-mannosyl phosphate + L-seryl-[protein] = 3-O-(alpha-D-mannosyl)-L-seryl-[protein] + a di-trans,poly-cis-dolichyl phosphate + H(+). The catalysed reaction is a di-trans,poly-cis-dolichyl beta-D-mannosyl phosphate + L-threonyl-[protein] = 3-O-(alpha-D-mannosyl)-L-threonyl-[protein] + a di-trans,poly-cis-dolichyl phosphate + H(+). Its function is as follows. O-mannosyl-transferase that transfers mannosyl residues to the hydroxyl group of serine or threonine residues of proteins. This is Protein O-mannosyl-transferase tmem260 from Dictyostelium discoideum (Social amoeba).